Reading from the N-terminus, the 357-residue chain is Protein phosphatase 1 regulatory subunit 42 (357 aa).

7 LRR repeats span residues lysine 29–lysine 50, asparagine 51–threonine 72, asparagine 73–lysine 94, lysine 95–glycine 116, glutamate 117–proline 138, serine 147–glutamate 168, and asparagine 169–leucine 190. Residues asparagine 204 to tryptophan 242 enclose the LRRCT domain.

Interacts with PPP1CC isoform gamma-2; the interaction is direct. Interacts with actin, dynein, KIF5B, KIFC1 and tubulin. Associates with microtubules. In terms of processing, phosphorylated; in the testis.

Its subcellular location is the cytoplasm. The protein localises to the cytoskeleton. It localises to the microtubule organizing center. The protein resides in the centrosome. Functionally, regulates phosphatase activity of protein phosphatase 1 (PP1) complexes in the testis. The polypeptide is Protein phosphatase 1 regulatory subunit 42 (PPP1R42) (Macaca fascicularis (Crab-eating macaque)).